The following is a 101-amino-acid chain: Urinary protein 3 (101 aa).

Residues 1 to 21 (MGKHILLLPLGLSLLMSSLLA) form the signal peptide. The 78-residue stretch at 22–99 (LQCFRCISFD…CSATPFCNMV (78 aa)) folds into the UPAR/Ly6 domain. Disulfide bonds link Cys-24-Cys-51, Cys-27-Cys-36, Cys-43-Cys-70, Cys-73-Cys-89, and Cys-90-Cys-96.

It is found in the secreted. The chain is Urinary protein 3 from Rattus norvegicus (Rat).